The following is a 401-amino-acid chain: Nicotinate phosphoribosyltransferase (401 aa).

A Phosphohistidine; by autocatalysis modification is found at histidine 221.

It belongs to the NAPRTase family. Post-translationally, transiently phosphorylated on a His residue during the reaction cycle. Phosphorylation strongly increases the affinity for substrates and increases the rate of nicotinate D-ribonucleotide production. Dephosphorylation regenerates the low-affinity form of the enzyme, leading to product release.

The catalysed reaction is nicotinate + 5-phospho-alpha-D-ribose 1-diphosphate + ATP + H2O = nicotinate beta-D-ribonucleotide + ADP + phosphate + diphosphate. Its pathway is cofactor biosynthesis; NAD(+) biosynthesis; nicotinate D-ribonucleotide from nicotinate: step 1/1. Catalyzes the synthesis of beta-nicotinate D-ribonucleotide from nicotinate and 5-phospho-D-ribose 1-phosphate at the expense of ATP. This is Nicotinate phosphoribosyltransferase from Serratia proteamaculans (strain 568).